A 196-amino-acid polypeptide reads, in one-letter code: Probable malonic semialdehyde reductase RutE (196 aa).

It belongs to the nitroreductase family. HadB/RutE subfamily. FMN serves as cofactor.

The catalysed reaction is 3-hydroxypropanoate + NADP(+) = 3-oxopropanoate + NADPH + H(+). In terms of biological role, may reduce toxic product malonic semialdehyde to 3-hydroxypropionic acid, which is excreted. The polypeptide is Probable malonic semialdehyde reductase RutE (Klebsiella pneumoniae (strain 342)).